An 89-amino-acid chain; its full sequence is OMEGA-ectatommitoxin(02)-Rm1b (89 aa).

A signal peptide spans 1 to 30 (MKDSYISIVIAYLMVTFILVSSMPIEGEKG). 3 disulfides stabilise this stretch: Cys39/Cys52, Cys47/Cys68, and Cys70/Cys79. The region spanning 43–80 (YANYCFNGKCVHFVAQDEPGKPCYSCICDKFYIGKRCG) is the EGF-like domain.

The protein belongs to the EGF domain peptide family. Expressed by the venom gland.

The protein localises to the secreted. Functionally, ant peptide with probable defensive activity which acts as a potent agonist of the mammalian epidermal growth factor receptor (EGFR). Mimics, both structurally and functionally, vertebrate epidermal growth factor (EGF) peptide hormones. In vivo, intraplantar injection in mice causes long-lasting (several days) hypersensitivity of the injected paw to both mechanical and thermal stimuli. Its long-lasting effect is unusual for venom toxins whose effects are usually immediate. One possible explanation is that it would reduce the duration of a nest attack, discourage future attacks, or enhance the actions of subsequent exposure to other pain-inducing venom peptides. The polypeptide is OMEGA-ectatommitoxin(02)-Rm1b (Rhytidoponera metallica (Australian green-headed ant)).